The sequence spans 393 residues: 4-hydroxyphenylpyruvate dioxygenase (393 aa).

At threonine 2 the chain carries N-acetylthreonine. VOC domains lie at 18 to 152 (HFHS…KMTF) and 180 to 338 (IIDH…IFTK). Histidine 183 serves as a coordination point for Fe cation. Serine 211, serine 226, and serine 250 each carry phosphoserine. Residues histidine 266 and glutamate 349 each coordinate Fe cation.

The protein belongs to the 4HPPD family. In terms of assembly, homodimer. Fe cation serves as cofactor. As to expression, liver.

It localises to the cytoplasm. The protein localises to the endoplasmic reticulum membrane. It is found in the golgi apparatus membrane. The catalysed reaction is 3-(4-hydroxyphenyl)pyruvate + O2 = homogentisate + CO2. It participates in amino-acid degradation; L-phenylalanine degradation; acetoacetate and fumarate from L-phenylalanine: step 3/6. In terms of biological role, catalyzes the conversion of 4-hydroxyphenylpyruvic acid to homogentisic acid, one of the steps in tyrosine catabolism. In Sus scrofa (Pig), this protein is 4-hydroxyphenylpyruvate dioxygenase (HPD).